A 490-amino-acid chain; its full sequence is ATP synthase subunit beta, chloroplastic (490 aa).

Position 170-177 (170-177) interacts with ATP; the sequence is GGAGVGKT.

This sequence belongs to the ATPase alpha/beta chains family. In terms of assembly, F-type ATPases have 2 components, CF(1) - the catalytic core - and CF(0) - the membrane proton channel. CF(1) has five subunits: alpha(3), beta(3), gamma(1), delta(1), epsilon(1). CF(0) has four main subunits: a(1), b(1), b'(1) and c(9-12).

The protein resides in the plastid. It localises to the chloroplast thylakoid membrane. The enzyme catalyses ATP + H2O + 4 H(+)(in) = ADP + phosphate + 5 H(+)(out). Its function is as follows. Produces ATP from ADP in the presence of a proton gradient across the membrane. The catalytic sites are hosted primarily by the beta subunits. This chain is ATP synthase subunit beta, chloroplastic, found in Ipomoea setosa (Brazilian morning glory).